We begin with the raw amino-acid sequence, 473 residues long: Sulfhydrylase-like protein lolC2 (473 aa).

Position 226 is an N6-(pyridoxal phosphate)lysine (K226).

Belongs to the trans-sulfuration enzymes family. Requires pyridoxal 5'-phosphate as cofactor.

It participates in alkaloid biosynthesis. Functionally, sulfhydrylase-like protein; part of the gene cluster that mediates the biosynthesis of loline alkaloids, potent insecticidal agents composed of a pyrrolizidine ring system and an uncommon ether bridge linking carbons 2 and 7. Lolines are structurally differentiated by the various modifications of the L-amino group and include norloline, loline, N-methylloline, N-acetylloline, N-acetylnorloline, and N-formylloline. The first committed step is the condensation of O-acetyl-L-homoserine (derived from L-aspartic acid) and L-proline, probably catalyzed by the gamma-type pyridoxal 5'-phosphate(PLP)-dependent enzyme lolC, to give the diamino diacid, NACPP. Ensuing cyclization, decarboxylation, and acetylation steps yield 1-exo-acetamidopyrrolizidine (AcAP). LolO is required for installation of the ether bridge upon the pathway intermediate, 1-exo-acetamidopyrrolizidine (AcAP). In sequential 2-oxoglutarate- and O(2)-consuming steps, lolO removes hydrogens from C2 and C7 of AcAP to form both carbon-oxygen bonds in N-acetylnorloline (NANL), the precursor to all other lolines. The enzymes lolD, lolE, lolF and lolT have also been proposed to be involved in the ether-bridge installation. Further processing of the exocyclic moiety of NANL by fungal N-acetamidase (LolN), methyltransferase (LolM), and cytochrome P450 (LolP) enzymes, with occasional involvement of a plant acetyltransferase, generates the other known lolines. LolN transforms NANL to norlonine which is monomethylated and dimethylated to respectively lonine and N-methyllonine (NML) by lolM. LolP catalyzes hydroxylation of the methyl group in N-methylloline (NML) and further oxygenation to N-formylloline (NFL). A plant acetyltransferase is responsible for the acetylation of loline to form N-acetylloline (NAL). LolA might interact with aspartate kinase to prevent feedback inhibition of its activity by these end products and thereby promote production of L-homoserine from L-aspartate. The sequence is that of Sulfhydrylase-like protein lolC2 from Epichloe uncinata (Endophyte fungus).